The chain runs to 444 residues: Phosphoglucosamine mutase (444 aa).

Residue S102 is the Phosphoserine intermediate of the active site. Positions 102, 241, 243, and 245 each coordinate Mg(2+). S102 bears the Phosphoserine mark.

This sequence belongs to the phosphohexose mutase family. The cofactor is Mg(2+). Activated by phosphorylation.

The catalysed reaction is alpha-D-glucosamine 1-phosphate = D-glucosamine 6-phosphate. Its function is as follows. Catalyzes the conversion of glucosamine-6-phosphate to glucosamine-1-phosphate. The sequence is that of Phosphoglucosamine mutase from Mannheimia succiniciproducens (strain KCTC 0769BP / MBEL55E).